An 833-amino-acid chain; its full sequence is Ventricular zone-expressed PH domain-containing protein 1 (833 aa).

Interaction with TGFBR1 regions lie at residues 201–319 (AELL…LANM) and 663–833 (ESTF…TTYL). Residues 716–819 (QPLIEGKLKE…WLQCINVALA (104 aa)) enclose the PH domain.

It belongs to the MELT/VEPH family. Interacts with TGFBR1. As to expression, specifically expressed in kidney and eye. In the eye, expressed in retinal pigmented epithelium but not in the neural retina.

It is found in the cell membrane. Interacts with TGF-beta receptor type-1 (TGFBR1) and inhibits dissociation of activated SMAD2 from TGFBR1, impeding its nuclear accumulation and resulting in impaired TGF-beta signaling. May also affect FOXO, Hippo and Wnt signaling. This chain is Ventricular zone-expressed PH domain-containing protein 1 (Veph1), found in Mus musculus (Mouse).